The primary structure comprises 345 residues: MRVADFSFDLPDELIARYPMAQRNASRLLTLDGNSGALGDKQFTDLLEMINPGDLMVFNNTRVIPARMFGQKASGGKLEILVERMLDDKRILAHVRSSKSPKVDSLIHLDGGYQMKMVARHDTLFELELLSELTILEVLEAVGHMPLPPYIDRPDEDADKERYQTVYNQNPGAVAAPTAGLHFDDAMLDALKAKGVNIAFVTLHVGAGTFQPVRVDTIVEHKMHSEWANVPQDVVDLIAQTKAAGKRVVAVGTTSVRSLESAARASLGELKAFSGDTDIFIYPGYQFQVVDAMVTNFHLPESTLIMLVSAFAGFDHVMAAYQHAITQKYRFFSYGDAMFVTKKAH.

The protein belongs to the QueA family. In terms of assembly, monomer.

It is found in the cytoplasm. The enzyme catalyses 7-aminomethyl-7-carbaguanosine(34) in tRNA + S-adenosyl-L-methionine = epoxyqueuosine(34) in tRNA + adenine + L-methionine + 2 H(+). Its pathway is tRNA modification; tRNA-queuosine biosynthesis. In terms of biological role, transfers and isomerizes the ribose moiety from AdoMet to the 7-aminomethyl group of 7-deazaguanine (preQ1-tRNA) to give epoxyqueuosine (oQ-tRNA). In Shewanella sp. (strain W3-18-1), this protein is S-adenosylmethionine:tRNA ribosyltransferase-isomerase.